Reading from the N-terminus, the 156-residue chain is Ribosomal RNA large subunit methyltransferase H (156 aa).

S-adenosyl-L-methionine is bound by residues Leu-73, Gly-104, and Leu-123–Leu-128.

Belongs to the RNA methyltransferase RlmH family. As to quaternary structure, homodimer.

It is found in the cytoplasm. The enzyme catalyses pseudouridine(1915) in 23S rRNA + S-adenosyl-L-methionine = N(3)-methylpseudouridine(1915) in 23S rRNA + S-adenosyl-L-homocysteine + H(+). In terms of biological role, specifically methylates the pseudouridine at position 1915 (m3Psi1915) in 23S rRNA. This Sodalis glossinidius (strain morsitans) protein is Ribosomal RNA large subunit methyltransferase H.